The primary structure comprises 115 residues: Arsenic resistance transcriptional regulator ArsR2 (115 aa).

Positions 1–90 (MITPPDVFKS…EMLQVTLQAN (90 aa)) constitute an HTH arsR-type domain. Arsenite is bound by residues C30 and C32. Positions 31–54 (VCELMCALNDSQPKISRHLAQLRS) form a DNA-binding region, H-T-H motif.

In terms of assembly, homodimer.

It localises to the cytoplasm. Functionally, binds arsenite and regulates the expression of arsenic efflux pumps. In vitro, also binds antimony and bismuth, but not arsenate. This is Arsenic resistance transcriptional regulator ArsR2 from Pseudomonas putida (strain ATCC 47054 / DSM 6125 / CFBP 8728 / NCIMB 11950 / KT2440).